A 164-amino-acid chain; its full sequence is ATP synthase subunit b 1 (164 aa).

The helical transmembrane segment at 8-28 threads the bilayer; it reads PETWVAVAFVILMGVFAYFGV.

The protein belongs to the ATPase B chain family. In terms of assembly, F-type ATPases have 2 components, F(1) - the catalytic core - and F(0) - the membrane proton channel. F(1) has five subunits: alpha(3), beta(3), gamma(1), delta(1), epsilon(1). F(0) has three main subunits: a(1), b(2) and c(10-14). The alpha and beta chains form an alternating ring which encloses part of the gamma chain. F(1) is attached to F(0) by a central stalk formed by the gamma and epsilon chains, while a peripheral stalk is formed by the delta and b chains.

The protein localises to the cell inner membrane. In terms of biological role, f(1)F(0) ATP synthase produces ATP from ADP in the presence of a proton or sodium gradient. F-type ATPases consist of two structural domains, F(1) containing the extramembraneous catalytic core and F(0) containing the membrane proton channel, linked together by a central stalk and a peripheral stalk. During catalysis, ATP synthesis in the catalytic domain of F(1) is coupled via a rotary mechanism of the central stalk subunits to proton translocation. Its function is as follows. Component of the F(0) channel, it forms part of the peripheral stalk, linking F(1) to F(0). The polypeptide is ATP synthase subunit b 1 (Rhodopseudomonas palustris (strain BisB18)).